A 428-amino-acid polypeptide reads, in one-letter code: Dihydroorotase (428 aa).

Histidine 59 and histidine 61 together coordinate Zn(2+). Substrate contacts are provided by residues 61–63 and asparagine 93; that span reads HFR. Residues aspartate 151, histidine 178, and histidine 231 each coordinate Zn(2+). Asparagine 277 contacts substrate. Aspartate 304 contributes to the Zn(2+) binding site. Aspartate 304 is an active-site residue. Substrate is bound by residues histidine 308 and 322–323; that span reads FG.

The protein belongs to the metallo-dependent hydrolases superfamily. DHOase family. Class I DHOase subfamily. Homodimer. Requires Zn(2+) as cofactor.

The catalysed reaction is (S)-dihydroorotate + H2O = N-carbamoyl-L-aspartate + H(+). The protein operates within pyrimidine metabolism; UMP biosynthesis via de novo pathway; (S)-dihydroorotate from bicarbonate: step 3/3. Functionally, catalyzes the reversible cyclization of carbamoyl aspartate to dihydroorotate. The polypeptide is Dihydroorotase (Bacillus subtilis (strain 168)).